The primary structure comprises 580 residues: MAGTVRTACLVVAMLLSLDFPGQAQPPPPPPDATCHQVRSFFQRLQPGLKWVPETPVPGSDLQVCLPKGPTCCSRKMEEKYQLTARLNMEQLLQSASKELKFLIIQNAAVFQEAFEIVVRHAKNYTNAMFKNNYPSLTPQAFEFVGEFFTDVSLYILGSDINVDDMVNELFDSLFPVIYTQLMNPGLPDSALDINECLRGARRDLKVFGNFPKLIMTQVSKSLQVTRIFLQALNLGIEVINTTDHLKFSKDCGRMLTRMWYCSYCQGLMMVKPCGGYCNVVMQGCMAGVVEIDKYWREYILSLEELVNGMYRIYDMENVLLGLFSTIHDSIQYVQKNAGKLTTTIGKLCAHSQQRQYRSAYYPEDLFIDKKVLKVARVEHEETLSSRRRELIQKLKSFISFYSALPGYICSHSPVAENDTLCWNGQELVERYSQKAARNGMKNQFNLHELKMKGPEPVVSQIIDKLKHINQLLRTMSVPKGRVLDKNLDEEGFESGDCGDDEDECIGGSGDGMMKVKNQLRFLAELAYDLDVDDAPGSNQQATPKDNEISTFHNLGNVHSPLKLLTSMAISVVCFFFLVH.

Residues Met1–Ala24 form the signal peptide. Gln25 bears the Pyrrolidone carboxylic acid mark. 7 cysteine pairs are disulfide-bonded: Cys35–Cys72, Cys65–Cys262, Cys73–Cys265, Cys197–Cys349, Cys252–Cys285, Cys274–Cys422, and Cys278–Cys410. N-linked (GlcNAc...) asparagine glycans are attached at residues Asn124 and Asn241. Ser352 carries the phosphoserine modification. Asn418 carries N-linked (GlcNAc...) asparagine glycosylation. Ser495 and Ser509 each carry an O-linked (Xyl...) (glycosaminoglycan) serine glycan. Asn554 carries GPI-anchor amidated asparagine lipidation. The propeptide at Leu555–His580 is removed in mature form.

This sequence belongs to the glypican family. In terms of assembly, heterodimer; disulfide-linked. Cleavage by a furin-like convertase results in production of alpha and beta chains which form a disulfide-linked heterodimer. Interacts with DPP4. Interacts with FGF2. Interacts with WNT5A. Also interacts with WNT3A and WNT7B. Interacts with hedgehog protein SHH; the heparan sulfate chains are not required for the interaction. Also interacts with hedgehog protein IHH. Interacts with CD81. Interacts with Wnt receptors FZD4, FZD7 and FZD8; the heparan sulfate chains are required for the interaction. Post-translationally, O-glycosylated; contains heparan sulfate and/or chondroitin sulfate. Cleaved intracellularly by a furin-like convertase to generate 2 subunits, alpha and beta, which remain associated through disulfide bonds and are associated with the cell surface via the GPI-anchor. This processing is essential for its role in inhibition of hedgehog signaling. A second proteolytic event may result in cleavage of the protein on the cell surface, separating it from the GPI-anchor and leading to its shedding from the cell surface.

It localises to the cell membrane. Its function is as follows. Cell surface proteoglycan. Negatively regulates the hedgehog signaling pathway when attached via the GPI-anchor to the cell surface by competing with the hedgehog receptor PTC1 for binding to hedgehog proteins. Binding to the hedgehog protein SHH triggers internalization of the complex by endocytosis and its subsequent lysosomal degradation. Positively regulates the canonical Wnt signaling pathway by binding to the Wnt receptor Frizzled and stimulating the binding of the Frizzled receptor to Wnt ligands. Positively regulates the non-canonical Wnt signaling pathway. Binds to CD81 which decreases the availability of free CD81 for binding to the transcriptional repressor HHEX, resulting in nuclear translocation of HHEX and transcriptional repression. Inhibits the dipeptidyl peptidase activity of DPP4. Plays a role in limb patterning and skeletal development by controlling the cellular response to BMP4. Modulates the effects of growth factors BMP2, BMP7 and FGF7 on renal branching morphogenesis. Required for coronary vascular development. Plays a role in regulating cell movements during gastrulation. This Pan troglodytes (Chimpanzee) protein is Glypican-3 (GPC3).